The sequence spans 206 residues: Tumor protein D54 (206 aa).

At Met-1 the chain carries N-acetylmethionine. Residues 1 to 14 (MDSAGQDINLNSPN) are compositionally biased toward polar residues. The segment at 1–24 (MDSAGQDINLNSPNKGLLSDSMTD) is disordered. A phosphoserine mark is found at Ser-3, Ser-12, Ser-19, and Ser-21. Residues 38-82 (VEGLTEAEEEELRAELTKVEEEIVTLRQVLAAKERHCGELKRRLG) are a coiled coil. Ser-96, Ser-149, and Ser-161 each carry phosphoserine. The residue at position 163 (Thr-163) is a Phosphothreonine. Ser-166 carries the phosphoserine modification. Thr-173 is modified (phosphothreonine). Positions 175 to 185 (KSKVVGDRENG) are enriched in basic and acidic residues. The disordered stretch occupies residues 175–206 (KSKVVGDRENGSDNLPSSAGSGDKPLSDPAPF). 2 positions are modified to phosphoserine: Ser-192 and Ser-195.

It belongs to the TPD52 family. Forms a homodimer or heterodimer with other members of the family. Interacts with MAL2.

The sequence is that of Tumor protein D54 (TPD52L2) from Homo sapiens (Human).